Reading from the N-terminus, the 287-residue chain is Small ribosomal subunit protein uS3 (287 aa).

The region spanning 38-106 is the KH type-2 domain; the sequence is IRRLLATGLE…QVQLNILEVK (69 aa). Residues 216–287 are disordered; that stretch reads AAAPAGADRP…AETTTQNPGS (72 aa). Residues 238 to 287 are compositionally biased toward low complexity; the sequence is SGASGTTATSTDAGRAASGTQEAPAAAEAAAGTEAAAGAAAETTTQNPGS.

The protein belongs to the universal ribosomal protein uS3 family. Part of the 30S ribosomal subunit. Forms a tight complex with proteins S10 and S14.

Functionally, binds the lower part of the 30S subunit head. Binds mRNA in the 70S ribosome, positioning it for translation. This chain is Small ribosomal subunit protein uS3, found in Mycobacterium sp. (strain JLS).